A 540-amino-acid chain; its full sequence is 2-isopropylmalate synthase (540 aa).

Residues 8–269 (VLIFDTTLRD…YFNPFFGREP (262 aa)) form the Pyruvate carboxyltransferase domain. Residues aspartate 17, histidine 208, histidine 210, and asparagine 244 each contribute to the Mn(2+) site. The tract at residues 408–540 (QLRLVQVSCG…AVLADLRSGI (133 aa)) is regulatory domain.

This sequence belongs to the alpha-IPM synthase/homocitrate synthase family. LeuA type 1 subfamily. As to quaternary structure, homodimer. Mn(2+) serves as cofactor.

The protein localises to the cytoplasm. It catalyses the reaction 3-methyl-2-oxobutanoate + acetyl-CoA + H2O = (2S)-2-isopropylmalate + CoA + H(+). It participates in amino-acid biosynthesis; L-leucine biosynthesis; L-leucine from 3-methyl-2-oxobutanoate: step 1/4. Catalyzes the condensation of the acetyl group of acetyl-CoA with 3-methyl-2-oxobutanoate (2-ketoisovalerate) to form 3-carboxy-3-hydroxy-4-methylpentanoate (2-isopropylmalate). This Prochlorococcus marinus (strain MIT 9313) protein is 2-isopropylmalate synthase.